We begin with the raw amino-acid sequence, 64 residues long: Large ribosomal subunit protein bL35 (64 aa).

A compositionally biased stretch (basic residues) spans 1–15 (MPKQKSHSGASKRFR). The interval 1 to 22 (MPKQKSHSGASKRFRVTGSGKV) is disordered.

This sequence belongs to the bacterial ribosomal protein bL35 family.

This Frankia casuarinae (strain DSM 45818 / CECT 9043 / HFP020203 / CcI3) protein is Large ribosomal subunit protein bL35.